A 72-amino-acid polypeptide reads, in one-letter code: Large ribosomal subunit protein bL31c (72 aa).

The protein belongs to the bacterial ribosomal protein bL31 family. Type A subfamily. In terms of assembly, part of the 50S ribosomal subunit.

It is found in the plastid. It localises to the chloroplast. Binds the 23S rRNA. The chain is Large ribosomal subunit protein bL31c from Guillardia theta (Cryptophyte).